Reading from the N-terminus, the 399-residue chain is Acetate kinase (399 aa).

Mg(2+) is bound at residue Asn-9. ATP is bound at residue Lys-16. Arg-90 contacts substrate. Asp-147 (proton donor/acceptor) is an active-site residue. ATP is bound by residues 207–211, 282–284, and 330–334; these read HIGNG, DLR, and GVGEN. Residue Glu-384 coordinates Mg(2+).

This sequence belongs to the acetokinase family. Homodimer. Requires Mg(2+) as cofactor. It depends on Mn(2+) as a cofactor.

Its subcellular location is the cytoplasm. The catalysed reaction is acetate + ATP = acetyl phosphate + ADP. It participates in metabolic intermediate biosynthesis; acetyl-CoA biosynthesis; acetyl-CoA from acetate: step 1/2. Catalyzes the formation of acetyl phosphate from acetate and ATP. Can also catalyze the reverse reaction. The protein is Acetate kinase of Staphylococcus saprophyticus subsp. saprophyticus (strain ATCC 15305 / DSM 20229 / NCIMB 8711 / NCTC 7292 / S-41).